The primary structure comprises 406 residues: Glucose-6-phosphate isomerase (406 aa).

The Proton donor role is filled by E259. Active-site residues include H284 and K397.

The protein belongs to the GPI family.

It localises to the cytoplasm. It carries out the reaction alpha-D-glucose 6-phosphate = beta-D-fructose 6-phosphate. Its pathway is carbohydrate biosynthesis; gluconeogenesis. It participates in carbohydrate degradation; glycolysis; D-glyceraldehyde 3-phosphate and glycerone phosphate from D-glucose: step 2/4. Its function is as follows. Catalyzes the reversible isomerization of glucose-6-phosphate to fructose-6-phosphate. In Campylobacter jejuni subsp. jejuni serotype O:2 (strain ATCC 700819 / NCTC 11168), this protein is Glucose-6-phosphate isomerase.